The chain runs to 82 residues: Putative membrane protein insertion efficiency factor (82 aa).

Belongs to the UPF0161 family.

It is found in the cell inner membrane. Its function is as follows. Could be involved in insertion of integral membrane proteins into the membrane. The chain is Putative membrane protein insertion efficiency factor from Francisella tularensis subsp. holarctica (strain LVS).